A 92-amino-acid chain; its full sequence is Putative defensin-like protein 251 (92 aa).

Positions 1–27 are cleaved as a signal peptide; sequence MRCVTSFVVFCILMFFVLNIFTVEVKA. Disulfide bonds link Cys-34–Cys-90, Cys-45–Cys-69, Cys-53–Cys-82, and Cys-67–Cys-84.

It belongs to the DEFL family.

The protein localises to the secreted. The chain is Putative defensin-like protein 251 (SCRL12) from Arabidopsis thaliana (Mouse-ear cress).